Consider the following 129-residue polypeptide: Follitropin subunit beta (129 aa).

An N-terminal signal peptide occupies residues 1–18; the sequence is MKSVQFCFLFCCWRATCC. 6 disulfide bridges follow: cysteine 21-cysteine 69, cysteine 35-cysteine 84, cysteine 38-cysteine 122, cysteine 46-cysteine 100, cysteine 50-cysteine 102, and cysteine 105-cysteine 112. Asparagine 25 and asparagine 42 each carry an N-linked (GlcNAc...) asparagine glycan.

It belongs to the glycoprotein hormones subunit beta family. Heterodimer. The active follitropin is a heterodimer composed of an alpha chain/CGA shared with other hormones and a unique beta chain/FSHB shown here.

The protein resides in the secreted. In terms of biological role, together with the alpha chain CGA constitutes follitropin, the follicle-stimulating hormone, and provides its biological specificity to the hormone heterodimer. Binds FSHR, a G protein-coupled receptor, on target cells to activate downstream signaling pathways. Follitropin is involved in follicle development and spermatogenesis in reproductive organs. The polypeptide is Follitropin subunit beta (FSHB) (Cervus nippon (Sika deer)).